The chain runs to 109 residues: Iron-sulfur cluster assembly protein CyaY (109 aa).

The protein belongs to the frataxin family.

Involved in iron-sulfur (Fe-S) cluster assembly. May act as a regulator of Fe-S biogenesis. In Shewanella sp. (strain ANA-3), this protein is Iron-sulfur cluster assembly protein CyaY.